We begin with the raw amino-acid sequence, 350 residues long: MGLSNVQLWTILLWALAWVQSTRSACPSCGAPTLTPQGERALVLELAKQQILEGLHLTSRPRITRPLPQAALTRALRRLQPRSMVPGNREKVISFATSIDKSTSTYRSVLTFQLSPLWSHHLYHARLWLHVPPSFPATLYLRIFGCGTTRCRGSRTFLAEHQTTSSGWHALTLPSSGLRSEESGVTKLQLEFRPLDLNSTTARLPRLLLDTAGQQRPFLELKIRANEPGAGRARRRTPTCESETPLCCRRDHYVDFQELGWRDWILQPEGYQLNYCSGQCPPHLAGSPGIAASFHSAVFSLLKANNPWPAGSSCCVPTARRPLSLLYLDHNGNVVKTDVPDMVVEACGCS.

An N-terminal signal peptide occupies residues 1-21 (MGLSNVQLWTILLWALAWVQS). Positions 22–236 (TRSACPSCGA…EPGAGRARRR (215 aa)) are excised as a propeptide. N-linked (GlcNAc...) asparagine glycosylation is present at N198. Cystine bridges form between C240–C248, C247–C315, C276–C347, and C280–C349.

This sequence belongs to the TGF-beta family. Homodimeric or heterodimeric through association with alpha and beta subunits, linked by one or more disulfide bonds. Inhibins are heterodimers of one alpha and one beta subunit. Activins are homo- or heterodimers of beta subunits only.

The protein resides in the secreted. Functionally, inhibins and activins inhibit and activate, respectively, the secretion of follitropin by the pituitary gland. Inhibins/activins are involved in regulating a number of diverse functions such as hypothalamic and pituitary hormone secretion, gonadal hormone secretion, germ cell development and maturation, erythroid differentiation, insulin secretion, nerve cell survival, embryonic axial development or bone growth, depending on their subunit composition. Inhibins appear to oppose the functions of activins. In terms of biological role, activin E is a homodimer of INHBE secreted by the liver that plays a crucial role in regulating metabolic homeostasis particularly in lipid metabolism and energy homeostasis. Plays a central role in the regulation of adipose tissue lipolysis by preventing the influx of fatty acids from adipose tissue into the liver. Mechanistically, signals via ACVR1C to activate SMAD2/3 signaling, suppressing PPARG target genes in adipose tissue, thereby reducing liver lipid content and improving glycemic control. Induces beige adipocyte formation and thermogenesis in response to cold exposure. The sequence is that of Inhibin beta E chain (Inhbe) from Rattus norvegicus (Rat).